Consider the following 492-residue polypeptide: Pentatricopeptide repeat-containing protein At4g21705, mitochondrial (492 aa).

The N-terminal 17 residues, 1–17 (MNILRRIPANLIASRYY), are a transit peptide targeting the mitochondrion. 8 PPR repeats span residues 125–159 (NDKTYGALLNCYVRQQNVEKSLLHFEKMKEMGFVT), 160–194 (SSLTYNNIMCLYTNIGQHEKVPKVLEEMKEENVAP), 195–225 (DNYSYRICINAFGAMYDLERIGGTLRDMERR), 231–261 (DWNTYAVAAKFYIDGGDCDRAVELLKMSENR), 266–296 (DGEGYNHLITLYARLGKKIEVLRLWDLEKDV), 301–335 (INQDYLTVLQSLVKIDALVEAEEVLTEWKSSGNCY), 336–370 (DFRVPNTVIRGYIGKSMEEKAEAMLEDLARRGKAT), and 371–405 (TPESWELVATAYAEKGTLENAFKCMKTALGVEVGS).

It belongs to the PPR family. P subfamily.

The protein resides in the mitochondrion. This is Pentatricopeptide repeat-containing protein At4g21705, mitochondrial from Arabidopsis thaliana (Mouse-ear cress).